The sequence spans 487 residues: b(0,+)-type amino acid transporter 1 (487 aa).

Residues methionine 1–glutamate 20 show a composition bias toward basic and acidic residues. Positions methionine 1–threonine 23 are disordered. Residues methionine 1–glycine 31 are Cytoplasmic-facing. Serine 18 bears the Phosphoserine mark. The helical transmembrane segment at leucine 32–valine 55 threads the bilayer. Isoleucine 43–glycine 47 is an L-arginine binding site. At leucine 56 to valine 62 the chain is on the extracellular side. Residues glycine 63 to alanine 84 form a helical membrane-spanning segment. At glutamate 85–tyrosine 110 the chain is on the cytoplasmic side. The chain crosses the membrane as a helical span at residues leucine 111–cysteine 137. At alanine 138–proline 147 the chain is on the extracellular side. Helical transmembrane passes span alanine 148 to serine 169 and valine 170 to isoleucine 193. Residues serine 194 to serine 217 lie on the Extracellular side of the membrane. A helical membrane pass occupies residues valine 218 to leucine 238. Aspartate 233 lines the L-arginine pocket. Residues asparagine 239–asparagine 251 are Cytoplasmic-facing. Residues leucine 252–tyrosine 274 form a helical membrane-spanning segment. The Extracellular portion of the chain corresponds to phenylalanine 275–serine 302. Residues tryptophan 303–glycine 325 form a helical membrane-spanning segment. At arginine 326–proline 351 the chain is on the cytoplasmic side. Transmembrane regions (helical) follow at residues alanine 352–aspartate 370 and isoleucine 371–leucine 391. Topologically, residues glycine 392 to proline 410 are cytoplasmic. Residues isoleucine 411–serine 431 form a helical membrane-spanning segment. Over serine 432–alanine 434 the chain is Extracellular. The chain crosses the membrane as a helical span at residues tryptophan 435 to phenylalanine 450. Over tyrosine 451–glutamate 487 the chain is Cytoplasmic.

Belongs to the amino acid-polyamine-organocation (APC) superfamily. Disulfide-linked heterodimer composed of the catalytic light chain subunit SLC7A9 and the heavy chain subunit SLC3A1. The heterodimer is the minimal functional unit. Assembles in heterotetramers (dimers of heterodimers) and higher order oligomers; the oligomerization is mediated by SLC3A1 likely to prevent degradation and facilitate heteromer trafficking to the plasma membrane. Interacts with CAV1. In terms of tissue distribution, outer medulla of kidney (at protein level). Kidney and small intestine. In the kidney localized to the apical membrane of the proximal tubules.

It localises to the apical cell membrane. It carries out the reaction L-leucine(out) + L-arginine(in) = L-leucine(in) + L-arginine(out). The catalysed reaction is L-histidine(out) + L-arginine(in) = L-histidine(in) + L-arginine(out). It catalyses the reaction L-arginine(in) + L-phenylalanine(out) = L-arginine(out) + L-phenylalanine(in). The enzyme catalyses L-cysteine(out) + L-arginine(in) = L-cysteine(in) + L-arginine(out). It carries out the reaction L-cystine(out) + L-arginine(in) = L-cystine(in) + L-arginine(out). The catalysed reaction is L-lysine(out) + L-arginine(in) = L-lysine(in) + L-arginine(out). Associates with SLC3A1 to form a functional transporter complex that mediates the electrogenic exchange between cationic amino acids and neutral amino acids, with a stoichiometry of 1:1. Has system b(0,+)-like activity with high affinity for extracellular cationic amino acids and L-cystine and lower affinity for intracellular neutral amino acids. Substrate exchange is driven by high concentration of intracellular neutral amino acids and the intracellular reduction of L-cystine to L-cysteine. Required for reabsorption of L-cystine and dibasic amino acids across the brush border membrane in renal proximal tubules. The sequence is that of b(0,+)-type amino acid transporter 1 (Slc7a9) from Rattus norvegicus (Rat).